A 219-amino-acid polypeptide reads, in one-letter code: Guanylate kinase (219 aa).

Positions 15 to 194 (GLMFVLSSPS…AFAEVHSILK (180 aa)) constitute a Guanylate kinase-like domain. 22-29 (SPSGAGKT) lines the ATP pocket.

The protein belongs to the guanylate kinase family.

Its subcellular location is the cytoplasm. It carries out the reaction GMP + ATP = GDP + ADP. Functionally, essential for recycling GMP and indirectly, cGMP. The polypeptide is Guanylate kinase (Rhodopseudomonas palustris (strain BisB18)).